Reading from the N-terminus, the 101-residue chain is Small ribosomal subunit protein uS14 (101 aa).

The protein belongs to the universal ribosomal protein uS14 family. As to quaternary structure, part of the 30S ribosomal subunit. Contacts proteins S3 and S10.

Binds 16S rRNA, required for the assembly of 30S particles and may also be responsible for determining the conformation of the 16S rRNA at the A site. This chain is Small ribosomal subunit protein uS14, found in Francisella tularensis subsp. tularensis (strain FSC 198).